A 307-amino-acid polypeptide reads, in one-letter code: MEFWGLEVKPGSTVKCEPGYGFVLHLSQAALGESKKSDNALMYVKIDDQKLAIGTLSVDKNPHIQFDLIFDKEFELSHTSKTTSVFFTGYKVEQPFEEDEMDLDSEDEDEELNVPVVKENGKADEKKQKSQEKAVAAPSKSSPDSKKSKDDDDSDEDETDDSDEDETDDSDEGLSSEEGDDDSSDEDDTSDDEEEDTPTPKKPEVGKKRPAESSVLKTPLSDKKAKVATPSSQKTGGKKGAAVHVATPHPAKGKTIVNNDKSVKSPKSAPKSGGSVPCKPCSKSFISETALQAHSRAKMGASESQVQ.

The segment covering 98–112 (EDEMDLDSEDEDEEL) has biased composition (acidic residues). The segment at 98 to 280 (EDEMDLDSED…KSGGSVPCKP (183 aa)) is disordered. Positions 119-132 (ENGKADEKKQKSQE) are enriched in basic and acidic residues. The span at 151-197 (DDDSDEDETDDSDEDETDDSDEGLSSEEGDDDSSDEDDTSDDEEEDT) shows a compositional bias: acidic residues. Over residues 198–211 (PTPKKPEVGKKRPA) the composition is skewed to basic and acidic residues. Positions 265–277 (SPKSAPKSGGSVP) are enriched in low complexity. The segment at 276-299 (VPCKPCSKSFISETALQAHSRAKM) adopts a C2H2-type; degenerate zinc-finger fold.

It belongs to the histone deacetylase HD2 family. Multimer. Isolated as a trimer composed of 3 proteins of 39, 42 and 45 kDa, possibly a homotrimer with different phosphorylation status or a heterotrimer with HDT2 and/or HDT3. In terms of processing, the N-terminus is blocked. Post-translationally, phosphorylated. Required for enzyme activity.

Its subcellular location is the nucleus. It localises to the nucleolus. Inhibited by 3-(4-Aroyl-1-methyl-1H-pyrrol-2-yl)-N-hydroxy-2-propenamides. 3-(1-methyl-4-phenylacetyl-1H-pyrrol-2-yl)-N-hydroxy-2-propenamide 1b and 3-[1-methyl-4-(3-phenyl-2-propenoyl)-1H-pyrrol-2-yl]-N-hydroxy-2-propenamide 1c are very potent inhibitors. In terms of biological role, mediates the deacetylation of lysine residues on the N-terminal part of the core histones (H2A, H2B, H3 and H4). Histone deacetylation gives a tag for epigenetic repression and plays an important role in transcriptional regulation, cell cycle progression and developmental events. Able to deacetylate all 4 core histones. The polypeptide is Histone deacetylase HDT1 (HDT1) (Zea mays (Maize)).